Consider the following 461-residue polypeptide: Phosphomethylpyrimidine synthase (461 aa).

Substrate contacts are provided by residues Asn-80, Met-109, Tyr-139, His-174, 194–196 (SRG), 235–238 (DSLR), and Glu-274. Residue His-278 participates in Zn(2+) binding. Tyr-301 contributes to the substrate binding site. A Zn(2+)-binding site is contributed by His-342. Residues Cys-422, Cys-425, and Cys-430 each contribute to the [4Fe-4S] cluster site.

This sequence belongs to the ThiC family. Homodimer. The cofactor is [4Fe-4S] cluster.

It carries out the reaction 5-amino-1-(5-phospho-beta-D-ribosyl)imidazole + S-adenosyl-L-methionine = 4-amino-2-methyl-5-(phosphooxymethyl)pyrimidine + CO + 5'-deoxyadenosine + formate + L-methionine + 3 H(+). It functions in the pathway cofactor biosynthesis; thiamine diphosphate biosynthesis. In terms of biological role, catalyzes the synthesis of the hydroxymethylpyrimidine phosphate (HMP-P) moiety of thiamine from aminoimidazole ribotide (AIR) in a radical S-adenosyl-L-methionine (SAM)-dependent reaction. The sequence is that of Phosphomethylpyrimidine synthase from Nautilia profundicola (strain ATCC BAA-1463 / DSM 18972 / AmH).